Here is a 599-residue protein sequence, read N- to C-terminus: NADH-quinone oxidoreductase subunit C/D (599 aa).

Residues 1–189 (MTDLTTHDLA…DPFVLTKQKE (189 aa)) are NADH dehydrogenase I subunit C. Residues 213 to 599 (DFMFLNLGPN…IDFVMSDVDR (387 aa)) are NADH dehydrogenase I subunit D.

In the N-terminal section; belongs to the complex I 30 kDa subunit family. The protein in the C-terminal section; belongs to the complex I 49 kDa subunit family. In terms of assembly, NDH-1 is composed of 13 different subunits. Subunits NuoB, CD, E, F, and G constitute the peripheral sector of the complex.

It is found in the cell inner membrane. It carries out the reaction a quinone + NADH + 5 H(+)(in) = a quinol + NAD(+) + 4 H(+)(out). NDH-1 shuttles electrons from NADH, via FMN and iron-sulfur (Fe-S) centers, to quinones in the respiratory chain. The immediate electron acceptor for the enzyme in this species is believed to be ubiquinone. Couples the redox reaction to proton translocation (for every two electrons transferred, four hydrogen ions are translocated across the cytoplasmic membrane), and thus conserves the redox energy in a proton gradient. The chain is NADH-quinone oxidoreductase subunit C/D from Pectobacterium carotovorum subsp. carotovorum (strain PC1).